We begin with the raw amino-acid sequence, 163 residues long: Nucleotide-binding protein Dvul_1191 (163 aa).

This sequence belongs to the YajQ family.

Nucleotide-binding protein. This Nitratidesulfovibrio vulgaris (strain DP4) (Desulfovibrio vulgaris) protein is Nucleotide-binding protein Dvul_1191.